A 352-amino-acid chain; its full sequence is Methylthioribose-1-phosphate isomerase (352 aa).

Substrate is bound by residues 55 to 57, Arg-98, and Gln-201; that span reads RGA. Asp-242 (proton donor) is an active-site residue. Position 252-253 (252-253) interacts with substrate; sequence NK.

Belongs to the eIF-2B alpha/beta/delta subunits family. MtnA subfamily.

It carries out the reaction 5-(methylsulfanyl)-alpha-D-ribose 1-phosphate = 5-(methylsulfanyl)-D-ribulose 1-phosphate. It functions in the pathway amino-acid biosynthesis; L-methionine biosynthesis via salvage pathway; L-methionine from S-methyl-5-thio-alpha-D-ribose 1-phosphate: step 1/6. In terms of biological role, catalyzes the interconversion of methylthioribose-1-phosphate (MTR-1-P) into methylthioribulose-1-phosphate (MTRu-1-P). The protein is Methylthioribose-1-phosphate isomerase of Methylococcus capsulatus (strain ATCC 33009 / NCIMB 11132 / Bath).